A 602-amino-acid chain; its full sequence is Potassium-transporting ATPase potassium-binding subunit (602 aa).

10 helical membrane passes run 3-23 (ANNLLQAAIFIVVLIAAAVPV), 64-84 (QYALATVAFNALGVLFLYALL), 135-155 (GLTVQNFLSAATGIVVVLALI), 178-198 (LYVLVPMAAIIAALLMSQGVI), 282-302 (FSNFLEIFAILIIPAALCLVF), 313-333 (VAVLAAMTVALAAAIGIETSA), 418-438 (GLYGMLVFALLAVFVAGLMIG), 456-476 (VSIVVLLTPLLVLVGTSIAVL), 522-542 (WMTAIAMWFGRFGTIVPVLAI), and 565-585 (LFVVLLLGTVLLVGALTYMPA).

This sequence belongs to the KdpA family. In terms of assembly, the system is composed of three essential subunits: KdpA, KdpB and KdpC.

Its subcellular location is the cell inner membrane. Functionally, part of the high-affinity ATP-driven potassium transport (or Kdp) system, which catalyzes the hydrolysis of ATP coupled with the electrogenic transport of potassium into the cytoplasm. This subunit binds the periplasmic potassium ions and delivers the ions to the membrane domain of KdpB through an intramembrane tunnel. This is Potassium-transporting ATPase potassium-binding subunit from Burkholderia mallei (strain ATCC 23344).